The primary structure comprises 215 residues: Golgi-associated RAB2 interactor protein 5A (215 aa).

2 disordered regions span residues 1–20 (MKRG…AGPG) and 174–215 (QDYS…LWGL). Positions 178–191 (ALEDDEDDDEDEDR) are enriched in acidic residues.

This sequence belongs to the GARIN family. In terms of assembly, interacts (via N-terminus) with RAB2B (in GTP-bound form).

The protein resides in the golgi apparatus. In terms of biological role, RAB2B effector protein which promotes cytosolic DNA-induced innate immune responses. Regulates IFN responses against DNA viruses by regulating the CGAS-STING signaling axis. The sequence is that of Golgi-associated RAB2 interactor protein 5A (GARIN5A) from Bos taurus (Bovine).